Here is a 258-residue protein sequence, read N- to C-terminus: tRNA (guanine-N(7)-)-methyltransferase (258 aa).

The segment at 1-42 is disordered; sequence MPETPLMRDNGPVNHADQDAPAVPEEGQTKDSKGSRLHPRVT. Residues E90, E115, D142, and D165 each coordinate S-adenosyl-L-methionine. The active site involves D165. Substrate is bound by residues K169, D201, and 235–238; that span reads TKFE.

It belongs to the class I-like SAM-binding methyltransferase superfamily. TrmB family.

It catalyses the reaction guanosine(46) in tRNA + S-adenosyl-L-methionine = N(7)-methylguanosine(46) in tRNA + S-adenosyl-L-homocysteine. It participates in tRNA modification; N(7)-methylguanine-tRNA biosynthesis. Functionally, catalyzes the formation of N(7)-methylguanine at position 46 (m7G46) in tRNA. This is tRNA (guanine-N(7)-)-methyltransferase from Rhodococcus jostii (strain RHA1).